The sequence spans 93 residues: Pyrimidine/purine nucleoside phosphorylase (93 aa).

Belongs to the nucleoside phosphorylase PpnP family.

The catalysed reaction is a purine D-ribonucleoside + phosphate = a purine nucleobase + alpha-D-ribose 1-phosphate. The enzyme catalyses adenosine + phosphate = alpha-D-ribose 1-phosphate + adenine. It carries out the reaction cytidine + phosphate = cytosine + alpha-D-ribose 1-phosphate. It catalyses the reaction guanosine + phosphate = alpha-D-ribose 1-phosphate + guanine. The catalysed reaction is inosine + phosphate = alpha-D-ribose 1-phosphate + hypoxanthine. The enzyme catalyses thymidine + phosphate = 2-deoxy-alpha-D-ribose 1-phosphate + thymine. It carries out the reaction uridine + phosphate = alpha-D-ribose 1-phosphate + uracil. It catalyses the reaction xanthosine + phosphate = alpha-D-ribose 1-phosphate + xanthine. In terms of biological role, catalyzes the phosphorolysis of diverse nucleosides, yielding D-ribose 1-phosphate and the respective free bases. Can use uridine, adenosine, guanosine, cytidine, thymidine, inosine and xanthosine as substrates. Also catalyzes the reverse reactions. The polypeptide is Pyrimidine/purine nucleoside phosphorylase (Tolumonas auensis (strain DSM 9187 / NBRC 110442 / TA 4)).